The primary structure comprises 215 residues: CASP-like protein UU3 (215 aa).

Residues 1–44 (MATAWESEYFDKVTPGERERAVPPMVPQQTPPPVYIQPQVSRNG) lie on the Cytoplasmic side of the membrane. Residues 45–65 (IVASIVLRLLTLIFAVVALAV) traverse the membrane as a helical segment. At 66–93 (LASNTGSFQVSTGSATSVKTIKFTILSA) the chain is on the extracellular side. Residues 94–114 (FTYLFAVCGVVAVYSLLLIIV) traverse the membrane as a helical segment. The Cytoplasmic segment spans residues 115–128 (EMIDLAVRGFTTHT). Residues 129-149 (LVAIFVFVLDQTMAYVLISAA) form a helical membrane-spanning segment. Residues 150–185 (SASANGVKVSRDESNITGYKFDISCSNLGIDDYCTK) lie on the Extracellular side of the membrane. The N-linked (GlcNAc...) asparagine glycan is linked to asparagine 164. The chain crosses the membrane as a helical span at residues 186 to 206 (ASASVAIAFIAFLFMAITAGV). At 207–215 (SARRLFKLP) the chain is on the cytoplasmic side.

This sequence belongs to the Casparian strip membrane proteins (CASP) family. In terms of assembly, homodimer and heterodimers.

The protein localises to the cell membrane. The protein is CASP-like protein UU3 of Physcomitrium patens (Spreading-leaved earth moss).